The sequence spans 141 residues: Large ribosomal subunit protein uL11 (141 aa).

It belongs to the universal ribosomal protein uL11 family. In terms of assembly, part of the ribosomal stalk of the 50S ribosomal subunit. Interacts with L10 and the large rRNA to form the base of the stalk. L10 forms an elongated spine to which L12 dimers bind in a sequential fashion forming a multimeric L10(L12)X complex. One or more lysine residues are methylated.

Its function is as follows. Forms part of the ribosomal stalk which helps the ribosome interact with GTP-bound translation factors. This is Large ribosomal subunit protein uL11 from Gloeothece citriformis (strain PCC 7424) (Cyanothece sp. (strain PCC 7424)).